Consider the following 263-residue polypeptide: 3-methyl-2-oxobutanoate hydroxymethyltransferase (263 aa).

Mg(2+) contacts are provided by Asp-45 and Asp-84. 3-methyl-2-oxobutanoate contacts are provided by residues 45 to 46, Asp-84, and Lys-112; that span reads DS. Mg(2+) is bound at residue Glu-114. Glu-180 serves as the catalytic Proton acceptor.

The protein belongs to the PanB family. As to quaternary structure, homodecamer; pentamer of dimers. Mg(2+) serves as cofactor.

It is found in the cytoplasm. It carries out the reaction 3-methyl-2-oxobutanoate + (6R)-5,10-methylene-5,6,7,8-tetrahydrofolate + H2O = 2-dehydropantoate + (6S)-5,6,7,8-tetrahydrofolate. Its pathway is cofactor biosynthesis; (R)-pantothenate biosynthesis; (R)-pantoate from 3-methyl-2-oxobutanoate: step 1/2. Its function is as follows. Catalyzes the reversible reaction in which hydroxymethyl group from 5,10-methylenetetrahydrofolate is transferred onto alpha-ketoisovalerate to form ketopantoate. The polypeptide is 3-methyl-2-oxobutanoate hydroxymethyltransferase (Salmonella agona (strain SL483)).